The primary structure comprises 464 residues: E3 ubiquitin-protein ligase TRAIP (464 aa).

An RING-type; atypical zinc finger spans residues 7–50 (CTICSDFFDNARDVAAITCGHTFHQECLLQWFHSAPHRTCPQCR). Coiled coils occupy residues 142 to 186 (LDKQ…MIRD) and 236 to 277 (AQKA…LQKT). The tract at residues 439-464 (KRKKVSRPTACTSSLANQPRLEDFLK) is disordered. Residues 456–464 (QPRLEDFLK) carry the PIP-box motif.

It belongs to the TRAIP family.

It localises to the nucleus. Its subcellular location is the nucleoplasm. The protein resides in the nucleolus. The protein localises to the chromosome. It is found in the cytoplasm. The catalysed reaction is S-ubiquitinyl-[E2 ubiquitin-conjugating enzyme]-L-cysteine + [acceptor protein]-L-lysine = [E2 ubiquitin-conjugating enzyme]-L-cysteine + N(6)-ubiquitinyl-[acceptor protein]-L-lysine.. It participates in protein modification; protein ubiquitination. Functionally, E3 ubiquitin ligase required to protect genome stability in response to replication stress. Acts as a key regulator of interstrand cross-link repair, which takes place when both strands of duplex DNA are covalently tethered together, thereby blocking replication and transcription. Controls the choice between the two pathways of replication-coupled interstrand-cross-link repair by mediating ubiquitination of mcm7 subunit of the CMG helicase complex. Short ubiquitin chains on mcm7 promote recruitment of DNA glycosylase neil3. If the interstrand cross-link cannot be cleaved by neil3, the ubiquitin chains continue to grow on mcm7, promoting the unloading of the CMG helicase complex by the vcp/p97 ATPase, enabling the Fanconi anemia DNA repair pathway. Only catalyzes ubiquitination of mcm7 when forks converge. Also involved in the repair of covalent DNA-protein cross-links (DPCs) during DNA synthesis: promotes ubiquitination of DPCs, leading to their degradation by the proteasome. Also acts as a negative regulator of innate immune signaling by inhibiting activation of NF-kappa-B mediated by TNF. The protein is E3 ubiquitin-protein ligase TRAIP of Xenopus laevis (African clawed frog).